We begin with the raw amino-acid sequence, 714 residues long: Fatty acid oxidation complex subunit alpha (714 aa).

Residues 1–190 (MEMASAFTLN…KLGLVDDVVP (190 aa)) form an enoyl-CoA hydratase region. The tract at residues 306 to 714 (APLNSVGILG…FWKTTATDLQ (409 aa)) is 3-hydroxyacyl-CoA dehydrogenase.

This sequence in the N-terminal section; belongs to the enoyl-CoA hydratase/isomerase family. It in the central section; belongs to the 3-hydroxyacyl-CoA dehydrogenase family. As to quaternary structure, heterotetramer of two alpha chains (FadJ) and two beta chains (FadI).

It is found in the cytoplasm. It carries out the reaction a (3S)-3-hydroxyacyl-CoA = a (2E)-enoyl-CoA + H2O. The enzyme catalyses a 4-saturated-(3S)-3-hydroxyacyl-CoA = a (3E)-enoyl-CoA + H2O. It catalyses the reaction a (3S)-3-hydroxyacyl-CoA + NAD(+) = a 3-oxoacyl-CoA + NADH + H(+). The catalysed reaction is (3S)-3-hydroxybutanoyl-CoA = (3R)-3-hydroxybutanoyl-CoA. The protein operates within lipid metabolism; fatty acid beta-oxidation. Functionally, catalyzes the formation of a hydroxyacyl-CoA by addition of water on enoyl-CoA. Also exhibits 3-hydroxyacyl-CoA epimerase and 3-hydroxyacyl-CoA dehydrogenase activities. In Shigella flexneri, this protein is Fatty acid oxidation complex subunit alpha.